The chain runs to 216 residues: Somatotropin (216 aa).

A signal peptide spans Met1–Ala26. His45 serves as a coordination point for Zn(2+). A disulfide bond links Cys78 and Cys189. Ser131 carries the post-translational modification Phosphoserine. Glu198 contacts Zn(2+). Cys206 and Cys214 are joined by a disulfide.

The protein belongs to the somatotropin/prolactin family.

The protein localises to the secreted. In terms of biological role, plays an important role in growth control. Its major role in stimulating body growth is to stimulate the liver and other tissues to secrete IGF1. It stimulates both the differentiation and proliferation of myoblasts. It also stimulates amino acid uptake and protein synthesis in muscle and other tissues. In Spalax ehrenbergi (Middle East blind mole rat), this protein is Somatotropin (GH1).